A 271-amino-acid polypeptide reads, in one-letter code: Indole-3-glycerol phosphate synthase (271 aa).

This sequence belongs to the TrpC family.

It carries out the reaction 1-(2-carboxyphenylamino)-1-deoxy-D-ribulose 5-phosphate + H(+) = (1S,2R)-1-C-(indol-3-yl)glycerol 3-phosphate + CO2 + H2O. It functions in the pathway amino-acid biosynthesis; L-tryptophan biosynthesis; L-tryptophan from chorismate: step 4/5. In Haloarcula marismortui (strain ATCC 43049 / DSM 3752 / JCM 8966 / VKM B-1809) (Halobacterium marismortui), this protein is Indole-3-glycerol phosphate synthase.